Reading from the N-terminus, the 158-residue chain is 18.1 kDa class I heat shock protein (158 aa).

The sHSP domain maps to 44-158 (ENPAFVSTRV…AEVKSIEISG (115 aa)).

Belongs to the small heat shock protein (HSP20) family. In terms of assembly, forms oligomeric structures.

The protein resides in the cytoplasm. This Pisum sativum (Garden pea) protein is 18.1 kDa class I heat shock protein (HSP18.1).